Here is a 421-residue protein sequence, read N- to C-terminus: Proton/sodium-glutamate symport protein (421 aa).

Residues 1–3 (MRK) lie on the Cytoplasmic side of the membrane. A helical membrane pass occupies residues 4–24 (IGLAWQIFIGLILGIIVGAIF). Residues 25–43 (YGNPKVATYLQPIGDIFLR) are Extracellular-facing. Residues 44 to 64 (LIKMIVIPIVISSLVVGVASV) traverse the membrane as a helical segment. The Cytoplasmic portion of the chain corresponds to 65–77 (GDLKKLGKLGGKT). The helical transmembrane segment at 78–98 (IIYFEIITTIAIVVGLLAANI) threads the bilayer. The Extracellular portion of the chain corresponds to 99–148 (FQPGTGVNMKSLEKTDIQSYVDTTNEVQHHSMVETFVNIVPKNIFESLTK). The helical transmembrane segment at 149 to 169 (GDMLPIIFFSVMFGLGVAAIG) threads the bilayer. Over 170–198 (EKGKPVLQFFQGTAEAMFYVTNQIMKFAP) the chain is Cytoplasmic. The helical transmembrane segment at 199 to 219 (FGVFALIGVTVSKFGVESLIP) threads the bilayer. Residues 220-222 (LSK) lie on the Extracellular side of the membrane. A helical transmembrane segment spans residues 223–243 (LVIVVYATMVFFIFVVLGGVA). Residue Lys-244 is a topological domain, cytoplasmic. A helical transmembrane segment spans residues 245 to 265 (LFGINIFHIIKILKDELILAY). The Extracellular portion of the chain corresponds to 266-306 (STASSETVLPKIMEKMENFGCPKAITSFVIPTGYSFNLDGS). A helical membrane pass occupies residues 307-327 (TLYQALAAIFIAQLYGIDMPI). Residues 328–330 (SQQ) are Cytoplasmic-facing. Helical transmembrane passes span 331–351 (ISLL…PGVS) and 352–372 (FVVL…LAFI). The Cytoplasmic segment spans residues 373–421 (AGIDRILDMARTAVNVIGNSLAAIIMSKWEGQYNEEKGKQYIAQLQQSA).

Belongs to the dicarboxylate/amino acid:cation symporter (DAACS) (TC 2.A.23) family. As to quaternary structure, homotrimer.

It is found in the cell membrane. Functionally, this carrier protein is part of the Na(+)-dependent, binding-protein-independent glutamate-aspartate transport system. This is Proton/sodium-glutamate symport protein (gltT) from Geobacillus stearothermophilus (Bacillus stearothermophilus).